The primary structure comprises 278 residues: 4-hydroxy-3-methylbut-2-enyl diphosphate reductase (278 aa).

C12 lines the [4Fe-4S] cluster pocket. Positions 41 and 74 each coordinate (2E)-4-hydroxy-3-methylbut-2-enyl diphosphate. Dimethylallyl diphosphate contacts are provided by H41 and H74. Residues H41 and H74 each contribute to the isopentenyl diphosphate site. Position 96 (C96) interacts with [4Fe-4S] cluster. H124 lines the (2E)-4-hydroxy-3-methylbut-2-enyl diphosphate pocket. H124 serves as a coordination point for dimethylallyl diphosphate. Isopentenyl diphosphate is bound at residue H124. Residue E126 is the Proton donor of the active site. T161 lines the (2E)-4-hydroxy-3-methylbut-2-enyl diphosphate pocket. C189 is a [4Fe-4S] cluster binding site. (2E)-4-hydroxy-3-methylbut-2-enyl diphosphate contacts are provided by S217, N219, and S261. Dimethylallyl diphosphate is bound by residues S217, N219, and S261. Residues S217, N219, and S261 each coordinate isopentenyl diphosphate.

The protein belongs to the IspH family. Requires [4Fe-4S] cluster as cofactor.

The catalysed reaction is isopentenyl diphosphate + 2 oxidized [2Fe-2S]-[ferredoxin] + H2O = (2E)-4-hydroxy-3-methylbut-2-enyl diphosphate + 2 reduced [2Fe-2S]-[ferredoxin] + 2 H(+). The enzyme catalyses dimethylallyl diphosphate + 2 oxidized [2Fe-2S]-[ferredoxin] + H2O = (2E)-4-hydroxy-3-methylbut-2-enyl diphosphate + 2 reduced [2Fe-2S]-[ferredoxin] + 2 H(+). It participates in isoprenoid biosynthesis; dimethylallyl diphosphate biosynthesis; dimethylallyl diphosphate from (2E)-4-hydroxy-3-methylbutenyl diphosphate: step 1/1. It functions in the pathway isoprenoid biosynthesis; isopentenyl diphosphate biosynthesis via DXP pathway; isopentenyl diphosphate from 1-deoxy-D-xylulose 5-phosphate: step 6/6. Catalyzes the conversion of 1-hydroxy-2-methyl-2-(E)-butenyl 4-diphosphate (HMBPP) into a mixture of isopentenyl diphosphate (IPP) and dimethylallyl diphosphate (DMAPP). Acts in the terminal step of the DOXP/MEP pathway for isoprenoid precursor biosynthesis. This chain is 4-hydroxy-3-methylbut-2-enyl diphosphate reductase, found in Anaeromyxobacter sp. (strain K).